Here is a 261-residue protein sequence, read N- to C-terminus: Ribosome biogenesis protein C3_06160C_A (261 aa).

Residues Met-1–Asp-38 are disordered. 2 consecutive short sequence motifs (nuclear localization signal) follow at residues Ile-11–Leu-18 and Ala-51–Lys-58. Residues Arg-17–Lys-37 show a composition bias toward basic and acidic residues. Positions Val-59–Glu-85 are disordered.

The protein belongs to the eukaryotic ribosomal protein eS8 family. Ribosome biogenesis protein NSA2 subfamily. As to quaternary structure, component of the pre-66S ribosomal particle. Interacts with NOP7 and RRP1. Interacts with RSA4 (via WD repeats).

It is found in the nucleus. It localises to the nucleolus. In terms of biological role, involved in the biogenesis of the 60S ribosomal subunit. May play a part in the quality control of pre-60S particles. This Candida albicans (strain SC5314 / ATCC MYA-2876) (Yeast) protein is Ribosome biogenesis protein C3_06160C_A.